The chain runs to 467 residues: Mothers against decapentaplegic homolog 2 (467 aa).

Ser-2 bears the N-acetylserine mark. A Phosphothreonine modification is found at Thr-8. Residues 10–176 (PVVKRLLGWK…YQRVETPVLP (167 aa)) enclose the MH1 domain. Lys-19 is modified (N6-acetyllysine). Residues Cys-74, Cys-149, Cys-161, and His-166 each coordinate Zn(2+). The segment covering 207 to 217 (PAGIEPQSNYI) has biased composition (polar residues). The segment at 207 to 251 (PAGIEPQSNYIPETPPPGYISEDGETSDQQLNQSMDTGSPAELSP) is disordered. Thr-220 carries the post-translational modification Phosphothreonine. Positions 221–225 (PPPGY) match the PY-motif motif. Polar residues predominate over residues 233 to 243 (SDQQLNQSMDT). Phosphoserine; by CAMK2 is present on Ser-240. Phosphoserine occurs at positions 245, 250, 255, 458, 460, and 464. An MH2 domain is found at 274–467 (WCSIAYYELN…SPSVRCSSMS (194 aa)). Residues Ser-465 and Ser-467 each carry the phosphoserine; by TGFBR1 modification.

This sequence belongs to the dwarfin/SMAD family. Monomer; in the absence of TGF-beta. Heterodimer; in the presence of TGF-beta. Forms a heterodimer with co-SMAD, SMAD4, in the nucleus to form the transactivation complex SMAD2/SMAD4. Found in a complex with SMAD3 and TRIM33 upon addition of TGF-beta. Identified in a complex that contains at least ZNF451, SMAD2, SMAD3 and SMAD4. Interacts (via the MH2 domain) with ZFYVE9; may form trimers with the SMAD4 co-SMAD. Interacts with TAZ/WWRT1. Interacts with FOXH1. Interacts with SNW1. Interacts with CREB-binding protein (CBP) and EP300. Interacts with SNON. Interacts with ALK4/ACVR1B. Interacts with SKOR1. Interacts with SKOR2. Interacts with PRDM16. Interacts (via MH2 domain) with LEMD3. Interacts with RBPMS. Interacts with WWP1. Interacts (dephosphorylated form, via the MH1 and MH2 domains) with RANBP3 (via its C-terminal R domain); the interaction results in the export of dephosphorylated SMAD3 out of the nucleus and termination of the TGF-beta signaling. Interacts with PDPK1 (via PH domain). Interacts with DAB2; the interactions are enhanced upon TGF-beta stimulation. Interacts with USP15. Interacts with PPP5C. Interacts with LDLRAD4 (via the SMAD interaction motif). Interacts (via MH2 domain) with PMEPA1 (via the SMAD interaction motif). Interacts with ZFHX3. Interacts with ZNF451. Interacts with SMURF2 when phosphorylated on Ser-465/467. Interacts with PPM1A. Interacts with TGF-beta. Interacts with TGFBR1. Interacts with TGIF. Interacts with SMAD3 and TRIM33. Interacts with ZNF580. Interacts with NEDD4L in response to TGF-beta. Interacts with HGS. Interacts with AIP1. Interacts with WWP1. Interacts with PML. Interacts weakly with ZNF8. Interacts (when phosphorylated) with RNF111; RNF111 acts as an enhancer of the transcriptional responses by mediating ubiquitination and degradation of SMAD2 inhibitors. Interacts with YAP1 (when phosphorylated at 'Ser-112'). Interacts when phosphorylated with IPO7; the interaction facilitates translocation of SMAD2 to the nucleus. Interacts with MTMR4; negatively regulates TGF-beta signaling through SMAD2 dephosphorylation and retention in endosomes. In terms of processing, in response to TGF-beta, phosphorylated on the C-terminal SXS motif by TGF-beta and activin type 1 receptor kinases, phosphorylation declines progressively in a KMT5A-dependent manner. Phosphorylation in this motif is required for interaction with a number of proteins including SMURF2, SNON and SMAD4 in response to TGF-beta. Dephosphorylated in this motif by PPM1A leading to disruption of the SMAD2/3-SMAD4 complex, nuclear export and termination of the TGF-beta signaling. In response to decorin, the naturally occurring inhibitor of TGF-beta signaling, phosphorylated on Ser-240 by CaMK2. Phosphorylated by MAPK3 upon EGF stimulation; which increases transcriptional activity and stability, and is blocked by calmodulin. Phosphorylated by PDPK1. Post-translationally, acetylated on Lys-19 by coactivators in response to TGF-beta signaling, which increases transcriptional activity. In response to TGF-beta, ubiquitinated by NEDD4L; which promotes its degradation. Monoubiquitinated, leading to prevent DNA-binding. Deubiquitination by USP15 alleviates inhibition and promotes activation of TGF-beta target genes. Ubiquitinated by RNF111, leading to its degradation: only SMAD2 proteins that are 'in use' are targeted by RNF111, RNF111 playing a key role in activating SMAD2 and regulating its turnover. Expressed in cardiomyocytes.

The protein localises to the cytoplasm. The protein resides in the nucleus. Receptor-regulated SMAD (R-SMAD) that is an intracellular signal transducer and transcriptional modulator activated by TGF-beta (transforming growth factor) and activin type 1 receptor kinases. Binds the TRE element in the promoter region of many genes that are regulated by TGF-beta and, on formation of the SMAD2/SMAD4 complex, activates transcription. Promotes TGFB1-mediated transcription of odontoblastic differentiation genes in dental papilla cells. Positively regulates PDPK1 kinase activity by stimulating its dissociation from the 14-3-3 protein YWHAQ which acts as a negative regulator. In Rattus norvegicus (Rat), this protein is Mothers against decapentaplegic homolog 2 (Smad2).